Consider the following 504-residue polypeptide: Putative ribose/galactose/methyl galactoside import ATP-binding protein (504 aa).

ABC transporter domains lie at 5 to 242 (ISVK…GRNL) and 252 to 497 (TSAN…TRRE). 37 to 44 (GENGAGKS) provides a ligand contact to ATP.

This sequence belongs to the ABC transporter superfamily. Carbohydrate importer 2 (CUT2) (TC 3.A.1.2) family.

Its subcellular location is the cell inner membrane. It catalyses the reaction D-ribose(out) + ATP + H2O = D-ribose(in) + ADP + phosphate + H(+). The enzyme catalyses D-galactose(out) + ATP + H2O = D-galactose(in) + ADP + phosphate + H(+). Part of an ABC transporter complex involved in carbohydrate import. Could be involved in ribose, galactose and/or methyl galactoside import. Responsible for energy coupling to the transport system. The chain is Putative ribose/galactose/methyl galactoside import ATP-binding protein from Albidiferax ferrireducens (strain ATCC BAA-621 / DSM 15236 / T118) (Rhodoferax ferrireducens).